The chain runs to 829 residues: Venom phosphodiesterase CdcPDE (829 aa).

2 SMB domains span residues 8-51 (PQVS…VLPT) and 52-96 (QSWS…GETS). Cystine bridges form between Cys12–Cys16, Cys12–Cys29, Cys16–Cys47, Cys27–Cys29, Cys27–Cys40, Cys33–Cys39, Cys40–Cys47, Cys56–Cys61, Cys56–Cys73, Cys61–Cys91, Cys71–Cys73, Cys71–Cys84, Cys77–Cys83, Cys84–Cys91, Cys102–Cys148, and Cys110–Cys322. N-linked (GlcNAc...) asparagine glycosylation is present at Asn17. A Cell attachment site motif is present at residues 36–38 (RQA). 2 residues coordinate a divalent metal cation: Asp125 and Thr163. Thr163 functions as the AMP-threonine intermediate in the catalytic mechanism. 2 N-linked (GlcNAc...) asparagine glycosylation sites follow: Asn194 and Asn237. Lys249 is an AMP binding site. The a divalent metal cation site is built by Asp283, His287, Asp330, and His331. Position 287 (His287) interacts with AMP. 6 disulfide bridges follow: Cys338–Cys435, Cys386–Cys771, Cys519–Cys577, Cys532–Cys632, Cys534–Cys617, and Cys740–Cys750. A glycan (N-linked (GlcNAc...) asparagine) is linked at Asn383. His440 is a binding site for a divalent metal cation. N-linked (GlcNAc...) asparagine glycans are attached at residues Asn572 and Asn652.

The protein belongs to the nucleotide pyrophosphatase/phosphodiesterase family. As to quaternary structure, monomer. It depends on a divalent metal cation as a cofactor. N-glycosylated. Glycosylation counts for an increased mass of ~9%. Post-translationally, contains 16 disulfide bonds. In terms of tissue distribution, expressed by venom gland.

It is found in the secreted. It carries out the reaction ADP + H2O = AMP + phosphate + H(+). Its function is as follows. Hydrolyzes ADP with high activity. Shows weak or no activity on 5'-AMP, 5'-GMP, 3'-AMP, ATP, cAMP, and cGMP. Is devoid of monophosphatase and proteinase activities. Inhibits ADP-induced platelet aggregation and is cytotoxic to human keratinocytes. Kinetic parameters indicated a higher affinity for the substrate bis(p-nitrophenyl) phosphate compared to others snake venom PDEs. Is recognized by the crotalid antivenom produced by the Instituto Butantan. This chain is Venom phosphodiesterase CdcPDE, found in Crotalus durissus collilineatus (Brazilian rattlesnake).